The primary structure comprises 734 residues: ATP-dependent RNA helicase SUV3L, mitochondrial (734 aa).

The N-terminal 60 residues, 1 to 60, are a transit peptide targeting the mitochondrion; it reads MAAAAAIAAALLRRSTSSQHHRRILLLPLLSHLQRAAPRSPSPWDPPPHHRFFFSSDVTA. Residues 58–88 form a disordered region; sequence VTAEGDSKPRPPLDGKQLWREVSTSEPATGA. Basic and acidic residues predominate over residues 62–76; that stretch reads GDSKPRPPLDGKQLW. The 159-residue stretch at 198-356 folds into the Helicase ATP-binding domain; it reads FARAMRRRVV…RFKPLVVEAK (159 aa). Residue 211-218 participates in ATP binding; that stretch reads GPTNSGKT. In terms of domain architecture, Helicase C-terminal spans 357 to 525; it reads TLLGDLKNVR…SFAIQFPDLT (169 aa). Residues N594 and N614 are each glycosylated (N-linked (GlcNAc...) asparagine). The interval 667-734 is disordered; that stretch reads ASWKPTSRQQ…QDPSSLNFVA (68 aa). Residues 684–693 show a composition bias toward acidic residues; it reads EEDNDVEQAS. Residues 695–709 are compositionally biased toward basic and acidic residues; sequence DNAKNDSEDGYERSI. The N-linked (GlcNAc...) asparagine glycan is linked to N699. Residues 725 to 734 show a composition bias toward polar residues; that stretch reads QDPSSLNFVA.

The protein belongs to the helicase family. Homodimer; in free form. Component of the mitochondrial degradosome (mtEXO) complex which is a heteropentamer containing 2 copies of SUPV3L1 and 3 copies of PNPT1. Mg(2+) serves as cofactor. Requires Mn(2+) as cofactor.

The protein localises to the nucleus. Its subcellular location is the mitochondrion matrix. It is found in the mitochondrion nucleoid. The catalysed reaction is ATP + H2O = ADP + phosphate + H(+). Functionally, major helicase player in mitochondrial RNA metabolism. Component of the mitochondrial degradosome (mtEXO) complex, that degrades 3' overhang double-stranded RNA with a 3'-to-5' directionality in an ATP-dependent manner. ATPase and ATP-dependent multisubstrate helicase, able to unwind double-stranded (ds) DNA and RNA, and RNA/DNA heteroduplexes in the 5'-to-3' direction. Plays a role in the RNA surveillance system in mitochondria; regulates the stability of mature mRNAs, the removal of aberrantly formed mRNAs and the rapid degradation of non coding processing intermediates. Confers salinity and drought stress tolerances by maintaining both photosynthesis and antioxidant machinery, probably via an increase in plant hormones levels such as gibberellic acid (GA(3)), the cytokinin zeatin (Z) and indole-3-acetic acid (IAA). This is ATP-dependent RNA helicase SUV3L, mitochondrial from Oryza sativa subsp. japonica (Rice).